Consider the following 876-residue polypeptide: Leucine--tRNA ligase (876 aa).

Residues proline 43–histidine 53 carry the 'HIGH' region motif. The short motif at lysine 632–serine 636 is the 'KMSKS' region element. Lysine 635 contributes to the ATP binding site.

This sequence belongs to the class-I aminoacyl-tRNA synthetase family.

It is found in the cytoplasm. It catalyses the reaction tRNA(Leu) + L-leucine + ATP = L-leucyl-tRNA(Leu) + AMP + diphosphate. The chain is Leucine--tRNA ligase from Agrobacterium fabrum (strain C58 / ATCC 33970) (Agrobacterium tumefaciens (strain C58)).